The sequence spans 447 residues: UDP-glycosyltransferase 76B1 (447 aa).

UDP-alpha-D-glucose contacts are provided by residues Ser269, Trp327–Ala328, His345–Glu353, and Phe367–Gln370.

This sequence belongs to the UDP-glycosyltransferase family. Expressed in roots, leaves, hydathodes, sepals and style.

Functionally, glycosylates the amino acid-related molecules isoleucic acid (2-hydroxy-3-methylpentanoic acid) and valic acid (2-hydroxy-3-methylbutyric acid). Acts as a negative regulator of salicylic acid (SA)-dependent plant defense in the absence of pathogens and promotes the jasmonate (JA) response. Negatively influences the onset of senescence. The sequence is that of UDP-glycosyltransferase 76B1 from Arabidopsis thaliana (Mouse-ear cress).